A 187-amino-acid polypeptide reads, in one-letter code: RNA pyrophosphohydrolase (187 aa).

Positions 6–149 (GYRANVGIIL…KRQVYRQALT (144 aa)) constitute a Nudix hydrolase domain. A Nudix box motif is present at residues 38 to 59 (GGIKSGETPTEAMYRELAEETG). Positions 166–187 (AYREPLEPVEKNRKKSSDTRQS) are disordered.

The protein belongs to the Nudix hydrolase family. RppH subfamily. A divalent metal cation serves as cofactor.

Accelerates the degradation of transcripts by removing pyrophosphate from the 5'-end of triphosphorylated RNA, leading to a more labile monophosphorylated state that can stimulate subsequent ribonuclease cleavage. In Nitrosomonas europaea (strain ATCC 19718 / CIP 103999 / KCTC 2705 / NBRC 14298), this protein is RNA pyrophosphohydrolase.